Consider the following 306-residue polypeptide: Protein YIPF1 (306 aa).

The Cytoplasmic segment spans residues 1-119; it reads MAAVDDLQFE…VRLYIRSNPD (119 aa). The tract at residues 14 to 62 is disordered; that stretch reads NAATSLTANPDATTVNIEDPGETPKHQSGSPRGSGREEDDELLGNDDSD. Over residues 15-29 the composition is skewed to polar residues; the sequence is AATSLTANPDATTVN. Residues 50-59 are compositionally biased toward acidic residues; it reads EEDDELLGND. The helical transmembrane segment at 120–140 threads the bilayer; sequence LYGPFWICATLVFAIAISGNL. The Lumenal segment spans residues 141–162; sequence SNFLIHLGEKTYRYVPEFRKVS. A helical membrane pass occupies residues 163-183; that stretch reads IAATTIYAYAWLVPLALWGFL. Residues 184 to 200 lie on the Cytoplasmic side of the membrane; it reads MWRNSKVMNIVSYSFLE. The helical transmembrane segment at 201-221 threads the bilayer; it reads IVCVYGYSLFIYIPTAILWII. Topologically, residues 222-227 are lumenal; sequence PQKAVR. A helical membrane pass occupies residues 228–248; the sequence is WILVMIALGISGSVLAMTFWP. Residues 249–256 lie on the Cytoplasmic side of the membrane; that stretch reads AVREDNRR. The helical transmembrane segment at 257-277 threads the bilayer; the sequence is VALATIVTIVLLHMLLSVGCL. The Lumenal segment spans residues 278–306; that stretch reads AYFFDAPEMDHLPTTTATPNQTVAAAKSS. Asn297 carries N-linked (GlcNAc...) asparagine glycosylation.

It belongs to the YIP1 family. Interacts with YIPF6; this interaction may stabilize YIPF1. May also form a ternary complex with YIPF2 and YIPF6.

The protein localises to the golgi apparatus. Its subcellular location is the cis-Golgi network membrane. It is found in the trans-Golgi network membrane. The protein resides in the late endosome membrane. This Pongo abelii (Sumatran orangutan) protein is Protein YIPF1 (YIPF1).